The sequence spans 329 residues: Protein phosphatase 1 regulatory subunit 42 (329 aa).

LRR repeat units follow at residues 30–51, 52–73, 74–95, 96–117, 118–139, 148–169, and 170–191; these read KLTH…SVCR, NLTV…GFAS, NLTH…SSLH, KLSK…EELK, SLKE…AFDP, TLCI…APLR, and KMTH…ETVF. The 39-residue stretch at 205 to 243 folds into the LRRCT domain; sequence NPVCHKPKYRDRLITVCKFLDDLDGKQINELSRQFLINW. The disordered stretch occupies residues 268–329; that stretch reads STSADFHLGP…SSTEWQSLKI (62 aa). The segment covering 318–329 has biased composition (polar residues); it reads GDSSTEWQSLKI.

It localises to the cytoplasm. Its subcellular location is the cytoskeleton. It is found in the microtubule organizing center. The protein localises to the centrosome. Its function is as follows. May regulate phosphatase activity of protein phosphatase 1 (PP1) complexes. In Danio rerio (Zebrafish), this protein is Protein phosphatase 1 regulatory subunit 42 (ppp1r42).